Here is a 688-residue protein sequence, read N- to C-terminus: Glycine--tRNA ligase beta subunit (688 aa).

The protein belongs to the class-II aminoacyl-tRNA synthetase family. As to quaternary structure, tetramer of two alpha and two beta subunits.

Its subcellular location is the cytoplasm. It carries out the reaction tRNA(Gly) + glycine + ATP = glycyl-tRNA(Gly) + AMP + diphosphate. The chain is Glycine--tRNA ligase beta subunit from Haemophilus influenzae (strain PittEE).